The sequence spans 255 residues: Acetylglutamate kinase (255 aa).

Substrate is bound by residues 40-41 (GG), Arg62, and Asn153.

Belongs to the acetylglutamate kinase family. ArgB subfamily.

Its subcellular location is the cytoplasm. The enzyme catalyses N-acetyl-L-glutamate + ATP = N-acetyl-L-glutamyl 5-phosphate + ADP. It participates in amino-acid biosynthesis; L-arginine biosynthesis; N(2)-acetyl-L-ornithine from L-glutamate: step 2/4. In terms of biological role, catalyzes the ATP-dependent phosphorylation of N-acetyl-L-glutamate. In Bacillus cereus (strain ATCC 10987 / NRS 248), this protein is Acetylglutamate kinase.